The sequence spans 104 residues: Naphthalene 1,2-dioxygenase system, ferredoxin component (104 aa).

Residues 6 to 101 (IEAVALSDIL…VKIENLRVMI (96 aa)) form the Rieske domain. [2Fe-2S] cluster contacts are provided by Cys45, His47, Cys64, and His67.

Belongs to the bacterial ring-hydroxylating dioxygenase ferredoxin component family. As to quaternary structure, the naphthalene dioxygenase (NDO) multicomponent enzyme system is composed of an electron transfer component and a dioxygenase component (iron sulfur protein (ISP)). The electron transfer component is composed of a ferredoxin reductase (NdoR) and a ferredoxin (NdoA), and the dioxygenase component is formed of a heterohexamer (trimer of heterodimers) of three large alpha subunits (NdoB) and three small beta subunits (NdoC). Requires [2Fe-2S] cluster as cofactor.

Its pathway is aromatic compound metabolism; naphthalene degradation. Component of the naphthalene dioxygenase (NDO) multicomponent enzyme system which catalyzes the incorporation of both atoms of molecular oxygen into naphthalene to form cis-(1R,2S)-dihydroxy-1,2-dihydronaphthalene. Functions as an intermediate electron transfer protein via a specific interaction with iron sulfur protein components (ISP) (NdoB and NdoC). Also able to catalyze the cis-dihydroxylation of biphenyl and phenanthrene. The sequence is that of Naphthalene 1,2-dioxygenase system, ferredoxin component from Pseudomonas putida (Arthrobacter siderocapsulatus).